We begin with the raw amino-acid sequence, 89 residues long: MVVIRLARGGAKKRPFYQVVVADQRRARDGRYIENIGFFNPLAKDSEEAVRLNMEAYNAWVAKGAQPSDRVASLAKAYNKSAAQTEATA.

This sequence belongs to the bacterial ribosomal protein bS16 family.

The chain is Small ribosomal subunit protein bS16 from Psychrobacter arcticus (strain DSM 17307 / VKM B-2377 / 273-4).